The primary structure comprises 438 residues: Cysteine--tRNA ligase (438 aa).

Cysteine 28 lines the Zn(2+) pocket. The short motif at 30–40 (PTVYNHLHLGN) is the 'HIGH' region element. Cysteine 207, histidine 232, and glutamate 236 together coordinate Zn(2+). Positions 264–268 (KMSKS) match the 'KMSKS' region motif. Residue lysine 267 coordinates ATP.

It belongs to the class-I aminoacyl-tRNA synthetase family. As to quaternary structure, monomer. Zn(2+) serves as cofactor.

It is found in the cytoplasm. It catalyses the reaction tRNA(Cys) + L-cysteine + ATP = L-cysteinyl-tRNA(Cys) + AMP + diphosphate. In Onion yellows phytoplasma (strain OY-M), this protein is Cysteine--tRNA ligase.